Here is a 974-residue protein sequence, read N- to C-terminus: MDDNDDGLMLNFAAPAAGSASVSSKRSKQTAKARFAQKRTAHQLRKQAPKQNRSVAPIESVQGVVTPASARLSPAPASANESPAAKRQRIEATSTSSAALSAPRFDPRSETAKSAPITSRSSQTTSSAASSSRKAIAPVTKLAGSSFASAGASSSASKQTNGGIVSTLFPAHGVLEDSSIALTPFQRKAYHPTNAPSVGSDFASCGLDPLLVYHLASKMNIGSNPTAIQKAALPHLLHPGLDRDILIQAQTGSGKTLTYLLPIVQSLLPLCEESFIDRSVGTLAIVLAPTRELARQIYEVLEKLVSLALSLKEQNQEVEGTVRRTRWLVPGLLSGGSTKNHEKQRLRKGCPILVSTPGRLLDHLQNTSSFDVGKCRWLVLDEADRLLEMGFEEQLTGIVRALDGRRNLACTAARQAMPAYQEGTAPGDADWIPDADVMDTLGMAWWAHARRVVLCSATLDEHVQVLAGKTLVNPKIIRGVKSDAAETSTQVTTDADSTLQKRAVKFAAPAQLAQSFVTTPPKLRLVTLLSLLRSYISRARRQWQHVDHQAGAGRVIVFMSCTDSVDFHYAAFGGARMNASENDASADVQVQDAQLATHVTSELIPDVPIYRLHGSMTQQERISSLKGFSGIRTKHSAERQGFQGSILLCTSVASRGLDLPEVGCVIQLDPPTEGGIEEYLHRVGRTARVGRAGESWLLVLPQELGWVEHVLESHMTIQSSDSASCSCSEIESKKQGSTRKITPASIELVLQQGMGGTMGTLEYQSRATEVQLAFERWVISGERPSLLARKAFLSHVRAYATHSAEEKQYFNVRALHLGHLAKAFALREAPRSLGAKSSAIGASSTPASSHETTNKKRMRIAPDTAESDSSSDSSDDAGSDYESHSNKKGDAFELDKAALAKLTESIVANADGSNRSKKLAREAQKAAAAAGVADDKAKQTDAEARMYAKVRALGKMSKKHGVLGAHAADEFQIA.

The disordered stretch occupies residues 1–135; it reads MDDNDDGLML…SSAASSSRKA (135 aa). Residues 13–24 are compositionally biased toward low complexity; the sequence is AAPAAGSASVSS. The span at 25 to 48 shows a compositional bias: basic residues; sequence KRSKQTAKARFAQKRTAHQLRKQA. Composition is skewed to low complexity over residues 67-85, 92-102, and 118-133; these read PASA…SPAA, ATSTSSAALSA, and TSRS…SSSR. The Q motif signature appears at 200–230; sequence SDFASCGLDPLLVYHLASKMNIGSNPTAIQK. In terms of domain architecture, Helicase ATP-binding spans 236–477; that stretch reads LLHPGLDRDI…GKTLVNPKII (242 aa). Residue 249-256 coordinates ATP; the sequence is AQTGSGKT. Residues 381–384 carry the DEAD box motif; it reads DEAD. The 217-residue stretch at 531–747 folds into the Helicase C-terminal domain; that stretch reads LLRSYISRAR…TRKITPASIE (217 aa). Positions 836-887 are disordered; the sequence is KSSAIGASSTPASSHETTNKKRMRIAPDTAESDSSSDSSDDAGSDYESHSNK. The span at 840–851 shows a compositional bias: polar residues; sequence IGASSTPASSHE.

This sequence belongs to the DEAD box helicase family. DDX31/DBP7 subfamily.

Its subcellular location is the nucleus. It is found in the nucleolus. The catalysed reaction is ATP + H2O = ADP + phosphate + H(+). Its function is as follows. ATP-binding RNA helicase involved in the biogenesis of 60S ribosomal subunits and is required for the normal formation of 25S and 5.8S rRNAs. The sequence is that of ATP-dependent RNA helicase DBP7 (DBP7) from Mycosarcoma maydis (Corn smut fungus).